Here is a 280-residue protein sequence, read N- to C-terminus: Putative pyruvate, phosphate dikinase regulatory protein (280 aa).

156-163 (GVSRTSKT) is an ADP binding site.

It belongs to the pyruvate, phosphate/water dikinase regulatory protein family. PDRP subfamily.

It catalyses the reaction N(tele)-phospho-L-histidyl/L-threonyl-[pyruvate, phosphate dikinase] + ADP = N(tele)-phospho-L-histidyl/O-phospho-L-threonyl-[pyruvate, phosphate dikinase] + AMP + H(+). The enzyme catalyses N(tele)-phospho-L-histidyl/O-phospho-L-threonyl-[pyruvate, phosphate dikinase] + phosphate + H(+) = N(tele)-phospho-L-histidyl/L-threonyl-[pyruvate, phosphate dikinase] + diphosphate. Its function is as follows. Bifunctional serine/threonine kinase and phosphorylase involved in the regulation of the pyruvate, phosphate dikinase (PPDK) by catalyzing its phosphorylation/dephosphorylation. This is Putative pyruvate, phosphate dikinase regulatory protein from Hyphomonas neptunium (strain ATCC 15444).